We begin with the raw amino-acid sequence, 85 residues long: Large ribosomal subunit protein bL27 (85 aa).

Positions 1-24 (MAHKKAGGSSRNGRDSHSKRLGVK) are disordered.

It belongs to the bacterial ribosomal protein bL27 family.

This chain is Large ribosomal subunit protein bL27, found in Nitrosomonas eutropha (strain DSM 101675 / C91 / Nm57).